Consider the following 83-residue polypeptide: MAELGEADEAELQRLVAAEQQKAQFTAQVHHFMELCWDKCVEKPGNRLDSRTENCLSSCVDRFIDTTLAITSRFAQIVQRGGQ.

Ala-2 is subject to N-acetylalanine. Positions 36–59 match the Twin CX3C motif motif; that stretch reads CWDKCVEKPGNRLDSRTENCLSSC. Disulfide bonds link Cys-36-Cys-59 and Cys-40-Cys-55.

Belongs to the small Tim family. As to quaternary structure, heterohexamer; possibly composed of 3 copies of TIMM8B and 3 copies of TIMM13, named soluble 70 kDa complex. Associates with the TIM22 complex, whose core is composed of TIMM22.

The protein resides in the mitochondrion inner membrane. Its function is as follows. Probable mitochondrial intermembrane chaperone that participates in the import and insertion of some multi-pass transmembrane proteins into the mitochondrial inner membrane. Also required for the transfer of beta-barrel precursors from the TOM complex to the sorting and assembly machinery (SAM complex) of the outer membrane. Acts as a chaperone-like protein that protects the hydrophobic precursors from aggregation and guide them through the mitochondrial intermembrane space. The chain is Mitochondrial import inner membrane translocase subunit Tim8 B (TIMM8B) from Bos taurus (Bovine).